Reading from the N-terminus, the 175-residue chain is Adenine phosphoribosyltransferase (175 aa).

Belongs to the purine/pyrimidine phosphoribosyltransferase family. Homodimer.

It localises to the cytoplasm. The enzyme catalyses AMP + diphosphate = 5-phospho-alpha-D-ribose 1-diphosphate + adenine. It participates in purine metabolism; AMP biosynthesis via salvage pathway; AMP from adenine: step 1/1. Catalyzes a salvage reaction resulting in the formation of AMP, that is energically less costly than de novo synthesis. This is Adenine phosphoribosyltransferase from Lactobacillus gasseri (strain ATCC 33323 / DSM 20243 / BCRC 14619 / CIP 102991 / JCM 1131 / KCTC 3163 / NCIMB 11718 / NCTC 13722 / AM63).